We begin with the raw amino-acid sequence, 155 residues long: Ribonuclease H (155 aa).

The region spanning 1–142 (MLKQVEIFTD…CDVLARDAAS (142 aa)) is the RNase H type-1 domain. Mg(2+)-binding residues include Asp10, Glu48, Asp70, and Asp134.

The protein belongs to the RNase H family. In terms of assembly, monomer. Mg(2+) is required as a cofactor.

The protein resides in the cytoplasm. It carries out the reaction Endonucleolytic cleavage to 5'-phosphomonoester.. Functionally, endonuclease that specifically degrades the RNA of RNA-DNA hybrids. The chain is Ribonuclease H from Serratia proteamaculans (strain 568).